Reading from the N-terminus, the 47-residue chain is Large ribosomal subunit protein bL33C (47 aa).

Belongs to the bacterial ribosomal protein bL33 family.

The polypeptide is Large ribosomal subunit protein bL33C (Staphylococcus epidermidis (strain ATCC 35984 / DSM 28319 / BCRC 17069 / CCUG 31568 / BM 3577 / RP62A)).